We begin with the raw amino-acid sequence, 365 residues long: Serine/threonine-protein phosphatase 2A activator 1 (365 aa).

The interval 321–349 is disordered; sequence YEAPSETSEKPAAGTAHTTTTTMPPPRMT. Residues 331–342 are compositionally biased toward low complexity; the sequence is PAAGTAHTTTTT.

The protein belongs to the PTPA-type PPIase family.

The protein localises to the cytoplasm. It is found in the nucleus. It carries out the reaction [protein]-peptidylproline (omega=180) = [protein]-peptidylproline (omega=0). Its function is as follows. PPIases accelerate the folding of proteins. It catalyzes the cis-trans isomerization of proline imidic peptide bonds in oligopeptides. Acts as a regulatory subunit for PP2A-like phosphatases modulating their activity or substrate specificity, probably by inducing a conformational change in the catalytic subunit, a direct target of the PPIase. Can reactivate inactive phosphatase PP2A-phosphatase methylesterase complexes (PP2Ai) in presence of ATP and Mg(2+) by dissociating the inactive form from the complex. The polypeptide is Serine/threonine-protein phosphatase 2A activator 1 (RRD1) (Eremothecium gossypii (strain ATCC 10895 / CBS 109.51 / FGSC 9923 / NRRL Y-1056) (Yeast)).